Reading from the N-terminus, the 61-residue chain is Calprismin (61 aa).

In terms of processing, glycosylated. In terms of tissue distribution, expressed by the calcifying mantle epithelium and incorporated into the shell's calcitic prismatic layer.

The polypeptide is Calprismin (Pinna nobilis (Noble pen shell)).